Consider the following 609-residue polypeptide: Thiamine metabolism regulatory protein THI3 (609 aa).

The disordered stretch occupies residues 578–598 (SKQVQEENENSSAVNTPTPEF).

The protein belongs to the TPP enzyme family. Mg(2+) serves as cofactor. Thiamine diphosphate is required as a cofactor.

The protein resides in the nucleus. It carries out the reaction 4-methyl-2-oxopentanoate + H(+) = 3-methylbutanal + CO2. The catalysed reaction is (S)-3-methyl-2-oxopentanoate + H(+) = 2-methylbutanal + CO2. The protein operates within amino-acid degradation; Ehrlich pathway. Functionally, one of five 2-oxo acid decarboxylases (PDC1, PDC5, PDC6, ARO10, and THI3) involved in amino acid catabolism. The enzyme catalyzes the decarboxylation of amino acids, which, in a first step, have been transaminated to the corresponding 2-oxo acids (alpha-keto-acids). In a third step, the resulting aldehydes are reduced to alcohols, collectively referred to as fusel oils or alcohols. Its preferred substrates are the transaminated amino acids derived from leucine (4-methyl-2-oxopentanoate, also alpha-keto-isocaproate) and isoleucine ((3S)-3-methyl-2-oxopentanoate, also alpha-keto-beta-methylvalerate), whereas transaminated valine, transaminated aromatic amino acids, and pyruvate are no substrates. In analogy to the pyruvate decarboxylases the enzyme may in a side-reaction catalyze condensation (or carboligation) reactions leading to the formation of 2-hydroxy ketone, collectively called acyloins. The enzyme is also positively regulating the thiamine metabolism by a molecular mechanism that may involve thiamine concentration sensing and signal transmission. This Saccharomyces cerevisiae (strain ATCC 204508 / S288c) (Baker's yeast) protein is Thiamine metabolism regulatory protein THI3 (THI3).